The sequence spans 284 residues: Large ribosomal subunit protein uL2 (284 aa).

Disordered stretches follow at residues 28–50 and 232–284; these read ELKG…FKKS and RGTA…DRRK. Residues 36–46 show a composition bias toward basic residues; the sequence is RSVRPNKKLSF. The span at 240–250 shows a compositional bias: basic and acidic residues; that stretch reads DHPHGGGEGRH. Over residues 264–284 the composition is skewed to basic residues; the sequence is KGLKTRDKRKSNKWIVKDRRK.

The protein belongs to the universal ribosomal protein uL2 family. Part of the 50S ribosomal subunit. Forms a bridge to the 30S subunit in the 70S ribosome.

One of the primary rRNA binding proteins. Required for association of the 30S and 50S subunits to form the 70S ribosome, for tRNA binding and peptide bond formation. It has been suggested to have peptidyltransferase activity; this is somewhat controversial. Makes several contacts with the 16S rRNA in the 70S ribosome. The chain is Large ribosomal subunit protein uL2 from Chlamydia trachomatis serovar L2 (strain ATCC VR-902B / DSM 19102 / 434/Bu).